Consider the following 532-residue polypeptide: Protein kinase domain-containing protein ppk9 (532 aa).

Residues 23–274 enclose the Protein kinase domain; the sequence is WLLGRTLGQG…VAEIMQHPWF (252 aa). Residues 29–37 and Lys-52 contribute to the ATP site; that span reads LGQGNLAKV. Asp-145 serves as the catalytic Proton acceptor. Residues 316–346 are compositionally biased toward polar residues; that stretch reads PSSSVGQIPQPTDHSALSPSKPMSISGTESP. Positions 316-349 are disordered; that stretch reads PSSSVGQIPQPTDHSALSPSKPMSISGTESPNPD.

The protein resides in the cytoplasm. It is found in the nucleus. It localises to the cytoskeleton. The protein localises to the microtubule organizing center. Its subcellular location is the spindle pole body. This chain is Protein kinase domain-containing protein ppk9 (ppk9), found in Schizosaccharomyces pombe (strain 972 / ATCC 24843) (Fission yeast).